The primary structure comprises 41 residues: Augerpeptide hhe6.1 (41 aa).

3 disulfides stabilise this stretch: Cys11-Cys32, Cys18-Cys35, and Cys31-Cys40.

As to expression, expressed by the venom duct.

The protein resides in the secreted. This Hastula hectica (Sea snail) protein is Augerpeptide hhe6.1.